Consider the following 932-residue polypeptide: Protein translocase subunit SecA (932 aa).

Residues glutamine 87, 105-109 (GEGKT), and aspartate 515 contribute to the ATP site. Zn(2+)-binding residues include cysteine 916, cysteine 918, cysteine 927, and histidine 928.

The protein belongs to the SecA family. As to quaternary structure, monomer and homodimer. Part of the essential Sec protein translocation apparatus which comprises SecA, SecYEG and auxiliary proteins SecDF-YajC and YidC. Requires Zn(2+) as cofactor.

It is found in the cell inner membrane. It localises to the cytoplasm. It carries out the reaction ATP + H2O + cellular proteinSide 1 = ADP + phosphate + cellular proteinSide 2.. In terms of biological role, part of the Sec protein translocase complex. Interacts with the SecYEG preprotein conducting channel. Has a central role in coupling the hydrolysis of ATP to the transfer of proteins into and across the cell membrane, serving both as a receptor for the preprotein-SecB complex and as an ATP-driven molecular motor driving the stepwise translocation of polypeptide chains across the membrane. This chain is Protein translocase subunit SecA, found in Burkholderia lata (strain ATCC 17760 / DSM 23089 / LMG 22485 / NCIMB 9086 / R18194 / 383).